We begin with the raw amino-acid sequence, 257 residues long: NAD-capped RNA hydrolase NudC (257 aa).

Residues lysine 25 and arginine 69 each contribute to the substrate site. Residues cysteine 98 and cysteine 101 each contribute to the Zn(2+) site. Residue glutamate 111 coordinates substrate. Residues cysteine 116 and cysteine 119 each coordinate Zn(2+). Tyrosine 124 contacts substrate. A Nudix hydrolase domain is found at proline 125–threonine 248. Residues alanine 158, glutamate 174, and glutamate 178 each contribute to the a divalent metal cation site. The Nudix box signature appears at glycine 159 to glycine 180. Glutamine 192 to serine 199 lines the substrate pocket. An a divalent metal cation-binding site is contributed by glutamate 219. Residue alanine 241 coordinates substrate.

It belongs to the Nudix hydrolase family. NudC subfamily. In terms of assembly, homodimer. The cofactor is Mg(2+). Requires Mn(2+) as cofactor. Zn(2+) serves as cofactor.

The enzyme catalyses a 5'-end NAD(+)-phospho-ribonucleoside in mRNA + H2O = a 5'-end phospho-adenosine-phospho-ribonucleoside in mRNA + beta-nicotinamide D-ribonucleotide + 2 H(+). The catalysed reaction is NAD(+) + H2O = beta-nicotinamide D-ribonucleotide + AMP + 2 H(+). It carries out the reaction NADH + H2O = reduced beta-nicotinamide D-ribonucleotide + AMP + 2 H(+). MRNA decapping enzyme that specifically removes the nicotinamide adenine dinucleotide (NAD) cap from a subset of mRNAs by hydrolyzing the diphosphate linkage to produce nicotinamide mononucleotide (NMN) and 5' monophosphate mRNA. The NAD-cap is present at the 5'-end of some mRNAs and stabilizes RNA against 5'-processing. Has preference for mRNAs with a 5'-end purine. Catalyzes the hydrolysis of a broad range of dinucleotide pyrophosphates. This chain is NAD-capped RNA hydrolase NudC, found in Escherichia coli O7:K1 (strain IAI39 / ExPEC).